The following is an 81-amino-acid chain: ATP synthase subunit c (81 aa).

Transmembrane regions (helical) follow at residues 7 to 27 (LVAIASAILIAFGALGTAIGF) and 55 to 75 (IAGLLDAVPMIGVGIGLFFIF).

This sequence belongs to the ATPase C chain family. F-type ATPases have 2 components, F(1) - the catalytic core - and F(0) - the membrane proton channel. F(1) has five subunits: alpha(3), beta(3), gamma(1), delta(1), epsilon(1). F(0) has three main subunits: a(1), b(2) and c(10-14). The alpha and beta chains form an alternating ring which encloses part of the gamma chain. F(1) is attached to F(0) by a central stalk formed by the gamma and epsilon chains, while a peripheral stalk is formed by the delta and b chains.

It is found in the cell inner membrane. F(1)F(0) ATP synthase produces ATP from ADP in the presence of a proton or sodium gradient. F-type ATPases consist of two structural domains, F(1) containing the extramembraneous catalytic core and F(0) containing the membrane proton channel, linked together by a central stalk and a peripheral stalk. During catalysis, ATP synthesis in the catalytic domain of F(1) is coupled via a rotary mechanism of the central stalk subunits to proton translocation. In terms of biological role, key component of the F(0) channel; it plays a direct role in translocation across the membrane. A homomeric c-ring of between 10-14 subunits forms the central stalk rotor element with the F(1) delta and epsilon subunits. In Acinetobacter baumannii (strain ACICU), this protein is ATP synthase subunit c.